The chain runs to 346 residues: Probable choline kinase 3 (346 aa).

ATP-binding residues include Arg-71, Gln-207, and Asp-224.

This sequence belongs to the choline/ethanolamine kinase family.

It catalyses the reaction choline + ATP = phosphocholine + ADP + H(+). The protein operates within phospholipid metabolism; phosphatidylcholine biosynthesis; phosphocholine from choline: step 1/1. In terms of biological role, involved in phospholipid biosynthesis. Catalyzes the first step in phosphatidylcholine biosynthesis. The protein is Probable choline kinase 3 of Arabidopsis thaliana (Mouse-ear cress).